The chain runs to 1846 residues: Insulin-like receptor (1846 aa).

Asparagine 113, asparagine 180, and asparagine 364 each carry an N-linked (GlcNAc...) asparagine glycan. 5 disulfide bridges follow: cysteine 371–cysteine 386, cysteine 393–cysteine 401, cysteine 397–cysteine 410, cysteine 413–cysteine 422, and cysteine 426–cysteine 438. The N-linked (GlcNAc...) asparagine glycan is linked to asparagine 453. Disulfide bonds link cysteine 469–cysteine 483 and cysteine 486–cysteine 490. Residue asparagine 518 is glycosylated (N-linked (GlcNAc...) asparagine). A disulfide bond links cysteine 615 and cysteine 646. N-linked (GlcNAc...) asparagine glycosylation is found at asparagine 652, asparagine 671, and asparagine 696. 3 Fibronectin type-III domains span residues 775 to 869 (TPDP…TMMG), 969 to 1067 (KPSS…LKRT), and 1077 to 1179 (LNET…TPGF). The segment at 944–980 (EKAENLGKAPKTLGGKKPLIHISKKKPSSSSTTSTPA) is disordered. Over residues 961–970 (PLIHISKKKP) the composition is skewed to basic residues. At 970–1183 (PSSSSTTSTP…VMTPGFFTVE (214 aa)) the chain is on the extracellular side. Over residues 971–980 (SSSSTTSTPA) the composition is skewed to low complexity. Residues asparagine 1017, asparagine 1047, asparagine 1078, asparagine 1087, and asparagine 1093 are each glycosylated (N-linked (GlcNAc...) asparagine). The helical transmembrane segment at 1184–1204 (IILGMLLVFLILMSIAGCIIY) threads the bilayer. The Cytoplasmic portion of the chain corresponds to 1205 to 1846 (YYIQVRYGKK…IEDNEHHPLV (642 aa)). The region spanning 1246–1528 (VVLGQQCGEG…LLAAEASPEF (283 aa)) is the Protein kinase domain. Residues 1252-1260 (CGEGSFGKV) and lysine 1282 contribute to the ATP site. Aspartate 1388 serves as the catalytic Proton acceptor. Disordered regions lie at residues 1718-1742 (ISSM…TNWS) and 1769-1826 (QQQQ…IFNG). The span at 1726 to 1742 (STGASSSSYGVPQTNWS) shows a compositional bias: polar residues. Low complexity predominate over residues 1808–1821 (YRNNGSPSRNGNSR).

This sequence belongs to the protein kinase superfamily. Tyr protein kinase family. Insulin receptor subfamily. In terms of assembly, tetramer of 2 alpha and 2 beta chains linked by disulfide bonds. The alpha chains contribute to the formation of the ligand-binding domain, while the beta chains carry the kinase domain. Interacts (via cytoplasmic domain) with shc-1 (PID domain). Interacts (via kinase domain) with daf-18 (via C-terminus). Interacts with casy-1; promoting axonal localization. Requires Mg(2+) as cofactor.

Its subcellular location is the membrane. The protein resides in the cell projection. The protein localises to the axon. It carries out the reaction L-tyrosyl-[protein] + ATP = O-phospho-L-tyrosyl-[protein] + ADP + H(+). With respect to regulation, autophosphorylation activates the kinase activity. Interaction with shc-1 may inhibit its activity. Insulin receptor-like tyrosine kinase which regulates metabolism, controls longevity and prevents developmental arrest at the dauer stage. Binding of INS family members may either stimulate, or antagonize, association of the receptor with downstream mediators such as pdk-1 and age-1. Required for germline progenitor proliferation during larval development. Plays a role in maintaining gonad integrity in a daf-16/FOXO-dependent manner. Required for the response to environmental stimuli such as light, food, pheromone, and temperature. Negatively regulates resistance to UV and oxidative stress. In a daf-16/FOXO-dependent manner, plays a role in regulating the response to white light. Role in immune function and pathogen resistance. Negatively regulates autophagy. Regulates daf-18/PTEN protein levels. Plays a role in controlling seam cell development during the larval stages. Functionally, required for taste avoidance learning in the cell body of ASER gustatory neurons. In terms of biological role, required for taste avoidance learning in axons of ASER gustatory neurons. The sequence is that of Insulin-like receptor from Caenorhabditis elegans.